Here is an 815-residue protein sequence, read N- to C-terminus: Protein SEY1 homolog (815 aa).

Residues 1 to 737 (MRQIIDYDCN…IQSTGRQPQN (737 aa)) lie on the Cytoplasmic side of the membrane. The GB1/RHD3-type G domain occupies 28-260 (TLGFNVISIL…LPKDYTRRIP (233 aa)). 38–45 (GCQSTGKS) is a GTP binding site. Positions 298 to 321 (AKDDILDGYKKSIKDLQKKMEKRE) form a coiled coil. The helical transmembrane segment at 738-758 (IPWWIYLLIIILGFDEITYVL) threads the bilayer. Residues 759–761 (TSP) are Lumenal-facing. The helical transmembrane segment at 762–782 (VLVTLLLLLASFIYSYLTGNF) threads the bilayer. Residues 783–815 (SSFCNYSQQFVIISTKILHYISGAIHSSLDNRK) are Cytoplasmic-facing.

This sequence belongs to the TRAFAC class dynamin-like GTPase superfamily. GB1/RHD3 GTPase family. RHD3 subfamily.

It is found in the endoplasmic reticulum membrane. Its function is as follows. Probable GTP-binding protein that may be involved in cell development. This chain is Protein SEY1 homolog, found in Cryptosporidium hominis.